Consider the following 580-residue polypeptide: Type 3 secretion system translocon protein SctE (580 aa).

2 helical membrane passes run 313-333 (ILGALLTIVSVVAAAFSGGAS) and 399-419 (IGSILGAIAGALVLVAAVVLV).

The protein belongs to the SctE/SipB/YopB family. In terms of assembly, the core secretion machinery of the T3SS is composed of approximately 20 different proteins, including cytoplasmic components, a base, an export apparatus and a needle. This subunit is involved in the formation of a pore, called the translocon, in host membrane.

It is found in the secreted. The protein resides in the host membrane. Its function is as follows. Component of the type III secretion system (T3SS), also called injectisome, which is used to inject bacterial effector proteins into eukaryotic host cells. IpaB/SctE and IpaC/SctB are inserted into the host membrane where they form a pore and allow the translocation of effector proteins into the cytosol of target cells. This Shigella dysenteriae protein is Type 3 secretion system translocon protein SctE.